Reading from the N-terminus, the 1186-residue chain is DNA-directed RNA polymerase subunit beta (1186 aa).

Residues Lys-1149 to Gln-1186 are disordered.

The protein belongs to the RNA polymerase beta chain family. In terms of assembly, the RNAP catalytic core consists of 2 alpha, 1 beta, 1 beta' and 1 omega subunit. When a sigma factor is associated with the core the holoenzyme is formed, which can initiate transcription.

The catalysed reaction is RNA(n) + a ribonucleoside 5'-triphosphate = RNA(n+1) + diphosphate. DNA-dependent RNA polymerase catalyzes the transcription of DNA into RNA using the four ribonucleoside triphosphates as substrates. This chain is DNA-directed RNA polymerase subunit beta, found in Bifidobacterium adolescentis (strain ATCC 15703 / DSM 20083 / NCTC 11814 / E194a).